The chain runs to 200 residues: Transcription elongation factor A protein-like 3 (200 aa).

Residues 1–19 (MEEVRGENEGKLEKEGKPE) show a composition bias toward basic and acidic residues. Residues 1–200 (MEEVRGENEG…QRGLHDIPYL (200 aa)) are disordered. A compositionally biased stretch (acidic residues) spans 20–34 (DEVEPEDEEKSDEDE). Serine 30 carries the post-translational modification Phosphoserine. Basic and acidic residues-rich tracts occupy residues 47-85 (GKPE…KPDS), 94-106 (RAAE…DYVP), and 114-153 (DRGT…EELR).

The protein belongs to the TFS-II family. TFA subfamily.

The protein resides in the nucleus. In terms of biological role, may be involved in transcriptional regulation. The sequence is that of Transcription elongation factor A protein-like 3 (Tceal3) from Mus musculus (Mouse).